Reading from the N-terminus, the 224-residue chain is 7-cyano-7-deazaguanine synthase (224 aa).

Residue 10–20 participates in ATP binding; sequence LSGGLDSATVV. Residues Cys-189, Cys-199, Cys-202, and Cys-205 each coordinate Zn(2+).

The protein belongs to the QueC family. The cofactor is Zn(2+).

The catalysed reaction is 7-carboxy-7-deazaguanine + NH4(+) + ATP = 7-cyano-7-deazaguanine + ADP + phosphate + H2O + H(+). Its pathway is purine metabolism; 7-cyano-7-deazaguanine biosynthesis. Its function is as follows. Catalyzes the ATP-dependent conversion of 7-carboxy-7-deazaguanine (CDG) to 7-cyano-7-deazaguanine (preQ(0)). The protein is 7-cyano-7-deazaguanine synthase of Ectopseudomonas mendocina (strain ymp) (Pseudomonas mendocina).